The sequence spans 434 residues: Meiosis-specific kinetochore protein (434 aa).

Disordered regions lie at residues 1 to 102 and 249 to 289; these read MDKI…PCET and VFAE…PDNK. The segment covering 46 to 62 has biased composition (basic and acidic residues); that stretch reads KGKEQGLRKITEKKELS. The segment covering 64–76 has biased composition (polar residues); it reads LTGSSSQRPSLLS. The POLO box domain (PBD)-binding motif lies at 334-336; it reads STP. A required for localization to kinetochores region spans residues 391-394; sequence EICC. The tract at residues 404-424 is disordered; sequence QMRRKDPAVKNRCSPPKDVPL.

In terms of assembly, interacts with CENPC. Interacts with PLK1; required for recruitment of PLK1 at kinetochores. As to expression, germ cell-specific. Expressed in both testis and ovary. Not expressed in other tissues.

The protein resides in the chromosome. The protein localises to the centromere. It localises to the kinetochore. Its function is as follows. Key regulator of kinetochore function during meiosis I: required both for mono-orientation of kinetochores on sister chromosomes and protection of centromeric cohesin from separase-mediated cleavage. Acts by facilitating kinetochore mono-orientation during meiosis I, when kinetochores on sister chromosomes face the same direction and are thus captured and pulled by spindle fibers from the same pole. Also required to prevent cleavage of cohesin at centromeres during meiosis I, possibly by acting as a regulator of the shugoshin-dependent protection pathway. Acts in collaboration with PLK1: required for PLK1 enrichment to kinetochores. Not required during meiosis II or mitosis. The protein is Meiosis-specific kinetochore protein of Mus musculus (Mouse).